The sequence spans 373 residues: 3',5'-bisphosphate nucleotidase AHL (373 aa).

The active-site Proton acceptor is Asp52. Mg(2+)-binding residues include Glu77, Asp144, Val146, and Asp147. Thr149 acts as the Proton acceptor in catalysis. Thr149, Ser281, Lys284, Lys298, and Asp310 together coordinate adenosine 3',5'-bisphosphate. Positions 281, 284, 298, and 310 each coordinate AMP. Asp310 contributes to the Mg(2+) binding site.

This sequence belongs to the inositol monophosphatase superfamily. Mg(2+) serves as cofactor. In terms of tissue distribution, expressed in roots, leaves, stems, flowers and siliques.

The catalysed reaction is adenosine 3',5'-bisphosphate + H2O = AMP + phosphate. The enzyme catalyses 3'-phosphoadenylyl sulfate + H2O = adenosine 5'-phosphosulfate + phosphate. Inhibited by Li(+) (IC(50)=10 mM), Na(+) (IC(50)=50 mM) and Ca(2+) (IC(50)=0.06 mM). In terms of biological role, phosphatase that converts adenosine 3'-phosphate 5'-phosphosulfate (PAPS) to adenosine 5'-phosphosulfate (APS) and 3'-phosphoadenosine 5'-phosphate (3'-PAP) to AMP. May regulate the flux of sulfur in the sulfur-activation pathway by converting PAPS to APS. Prevents both the toxicity of PAP on RNA processing enzymes as well as the product inhibition by PAP of sulfate conjugation. The polypeptide is 3',5'-bisphosphate nucleotidase AHL (Arabidopsis thaliana (Mouse-ear cress)).